The following is a 293-amino-acid chain: UDP-3-O-acyl-N-acetylglucosamine deacetylase (293 aa).

Residues histidine 79, histidine 236, and aspartate 240 each contribute to the Zn(2+) site. The Proton donor role is filled by histidine 263.

It belongs to the LpxC family. It depends on Zn(2+) as a cofactor.

It catalyses the reaction a UDP-3-O-[(3R)-3-hydroxyacyl]-N-acetyl-alpha-D-glucosamine + H2O = a UDP-3-O-[(3R)-3-hydroxyacyl]-alpha-D-glucosamine + acetate. It participates in glycolipid biosynthesis; lipid IV(A) biosynthesis; lipid IV(A) from (3R)-3-hydroxytetradecanoyl-[acyl-carrier-protein] and UDP-N-acetyl-alpha-D-glucosamine: step 2/6. Functionally, catalyzes the hydrolysis of UDP-3-O-myristoyl-N-acetylglucosamine to form UDP-3-O-myristoylglucosamine and acetate, the committed step in lipid A biosynthesis. The polypeptide is UDP-3-O-acyl-N-acetylglucosamine deacetylase (Phenylobacterium zucineum (strain HLK1)).